The sequence spans 153 residues: DNA gyrase inhibitor (153 aa).

Belongs to the DNA gyrase inhibitor family. In terms of assembly, interacts with DNA gyrase.

The protein resides in the cytoplasm. Functionally, inhibits the supercoiling activity of DNA gyrase. Acts by inhibiting DNA gyrase at an early step, prior to (or at the step of) binding of DNA by the gyrase. It protects cells against toxins that target DNA gyrase, by inhibiting activity of these toxins and reducing the formation of lethal double-strand breaks in the cell. This is DNA gyrase inhibitor from Pantoea sp. (strain At-9b).